The primary structure comprises 840 residues: Sorting nexin-25 (840 aa).

The PXA domain occupies 1 to 164 (MDRVLRDVFD…MLLRQLEYRE (164 aa)). In terms of domain architecture, RGS spans 287–401 (QFEDIMTNPF…LVSDLYEKLM (115 aa)). The segment at 404 to 437 (EEEEEPDAQLASEKDELGSGGEAGEEAVEGTSGV) is disordered. Positions 446–494 (IKLRELNEKLEYKRQALSSIQNAPKPDKKIISKLKDEILLIEKECTALQ) form a coiled coil. One can recognise a PX domain in the interval 508–628 (GLWRASITSA…AFLSPSPDYL (121 aa)). At serine 665 the chain carries Phosphoserine.

This sequence belongs to the sorting nexin family.

Its subcellular location is the endosome membrane. In terms of biological role, may be involved in several stages of intracellular trafficking. The polypeptide is Sorting nexin-25 (Snx25) (Mus musculus (Mouse)).